The primary structure comprises 406 residues: Protein ALP1-like (406 aa).

The short motif at 8-15 (KKKKRAEK) is the Nuclear localization signal element. One can recognise a DDE Tnp4 domain in the interval 187–353 (IDITHIVMNL…IIFVCCLLHN (167 aa)). The a divalent metal cation site is built by Asp188, Asp240, and Asp279.

This sequence belongs to the HARBI1 family. Requires a divalent metal cation as cofactor.

The protein localises to the nucleus. Its function is as follows. Transposase-derived protein that may have nuclease activity. The protein is Protein ALP1-like of Arabidopsis thaliana (Mouse-ear cress).